Reading from the N-terminus, the 330-residue chain is 5'-AMP-activated protein kinase subunit gamma-1 (330 aa).

Residues 1–21 (MESVAAESSPALENEHFQETP) are disordered. 3 CBS domains span residues 42–102 (PTSS…KSAL), 124–186 (SFKP…PKPE), and 197–259 (IGTY…NLDV). ADP contacts are provided by residues arginine 69, 84-89 (MLTITD), valine 129, 150-151 (HR), and lysine 169. AMP-binding positions include arginine 69, 84-89 (MLTITD), valine 129, histidine 150, 150-151 (HR), lysine 169, threonine 199, alanine 204, 225-226 (SA), and 241-244 (SKFD). ATP-binding positions include arginine 69, 84 to 89 (MLTITD), valine 129, 150 to 151 (HR), arginine 151, and lysine 169. The AMPK pseudosubstrate motif lies at 137 to 158 (LFDAVSSLIRNKIHRLPVIDPE). 241 to 244 (SKFD) contributes to the ADP binding site. 241-244 (SKFD) serves as a coordination point for ATP. Serine 260 is subject to Phosphoserine; by ULK1. Threonine 262 is modified (phosphothreonine; by ULK1). Arginine 268 is an ADP binding site. Position 268 (arginine 268) interacts with AMP. Arginine 268 serves as a coordination point for ATP. Position 269 is a phosphoserine; by ULK1 (serine 269). The region spanning 271 to 328 (YFEGVLKCYLHETLETIINRLVEAEVHRLVVVDEHDVVKGIVSLSDILQALVLTGGEK) is the CBS 4 domain. ADP-binding positions include leucine 276 and 297–298 (HR). Residues leucine 276, histidine 297, 297–298 (HR), and 313–316 (SLSD) contribute to the AMP site. Residues leucine 276 and 297 to 298 (HR) contribute to the ATP site.

The protein belongs to the 5'-AMP-activated protein kinase gamma subunit family. As to quaternary structure, AMPK is a heterotrimer of an alpha catalytic subunit (PRKAA1 or PRKAA2), a beta (PRKAB1 or PRKAB2) and a gamma non-catalytic subunits (PRKAG1, PRKAG2 or PRKAG3). Interacts with FNIP1 and FNIP2. Post-translationally, phosphorylated by ULK1 and ULK2; leading to negatively regulate AMPK activity and suggesting the existence of a regulatory feedback loop between ULK1, ULK2 and AMPK. In terms of processing, glycosylated; O-GlcNAcylated by OGT, promoting the AMP-activated protein kinase (AMPK) activity.

AMP/ATP-binding subunit of AMP-activated protein kinase (AMPK), an energy sensor protein kinase that plays a key role in regulating cellular energy metabolism. In response to reduction of intracellular ATP levels, AMPK activates energy-producing pathways and inhibits energy-consuming processes: inhibits protein, carbohydrate and lipid biosynthesis, as well as cell growth and proliferation. AMPK acts via direct phosphorylation of metabolic enzymes, and by longer-term effects via phosphorylation of transcription regulators. Also acts as a regulator of cellular polarity by remodeling the actin cytoskeleton; probably by indirectly activating myosin. Gamma non-catalytic subunit mediates binding to AMP, ADP and ATP, leading to activate or inhibit AMPK: AMP-binding results in allosteric activation of alpha catalytic subunit (PRKAA1 or PRKAA2) both by inducing phosphorylation and preventing dephosphorylation of catalytic subunits. ADP also stimulates phosphorylation, without stimulating already phosphorylated catalytic subunit. ATP promotes dephosphorylation of catalytic subunit, rendering the AMPK enzyme inactive. The protein is 5'-AMP-activated protein kinase subunit gamma-1 (Prkag1) of Mus musculus (Mouse).